A 212-amino-acid polypeptide reads, in one-letter code: Probable NADH dehydrogenase [ubiquinone] iron-sulfur protein 8, mitochondrial (212 aa).

2 consecutive 4Fe-4S ferredoxin-type domains span residues 104 to 133 (RRYP…IEAE) and 143 to 172 (TRYD…EGPN). [4Fe-4S] cluster contacts are provided by Cys113, Cys116, Cys119, Cys123, Cys152, Cys155, Cys158, and Cys162.

Belongs to the complex I 23 kDa subunit family. Complex I is composed of 45 different subunits This is a component of the iron-sulfur (IP) fragment of the enzyme. The cofactor is [4Fe-4S] cluster.

The protein resides in the mitochondrion. The enzyme catalyses a ubiquinone + NADH + 5 H(+)(in) = a ubiquinol + NAD(+) + 4 H(+)(out). Its function is as follows. Core subunit of the mitochondrial membrane respiratory chain NADH dehydrogenase (Complex I) that is believed to belong to the minimal assembly required for catalysis. Complex I functions in the transfer of electrons from NADH to the respiratory chain. The immediate electron acceptor for the enzyme is believed to be ubiquinone. The polypeptide is Probable NADH dehydrogenase [ubiquinone] iron-sulfur protein 8, mitochondrial (Caenorhabditis elegans).